Consider the following 227-residue polypeptide: LexA repressor (227 aa).

The segment at residues 26 to 46 (FDEMKEALDLASKSGIHRLIT) is a DNA-binding region (H-T-H motif). Residues serine 147 and lysine 185 each act as for autocatalytic cleavage activity in the active site.

The protein belongs to the peptidase S24 family. As to quaternary structure, homodimer.

The catalysed reaction is Hydrolysis of Ala-|-Gly bond in repressor LexA.. Its function is as follows. Represses a number of genes involved in the response to DNA damage (SOS response), including recA and lexA. In the presence of single-stranded DNA, RecA interacts with LexA causing an autocatalytic cleavage which disrupts the DNA-binding part of LexA, leading to derepression of the SOS regulon and eventually DNA repair. This is LexA repressor from Hyphomonas neptunium (strain ATCC 15444).